Here is a 501-residue protein sequence, read N- to C-terminus: Aspartyl/glutamyl-tRNA(Asn/Gln) amidotransferase subunit B (501 aa).

Belongs to the GatB/GatE family. GatB subfamily. As to quaternary structure, heterotrimer of A, B and C subunits.

The catalysed reaction is L-glutamyl-tRNA(Gln) + L-glutamine + ATP + H2O = L-glutaminyl-tRNA(Gln) + L-glutamate + ADP + phosphate + H(+). The enzyme catalyses L-aspartyl-tRNA(Asn) + L-glutamine + ATP + H2O = L-asparaginyl-tRNA(Asn) + L-glutamate + ADP + phosphate + 2 H(+). In terms of biological role, allows the formation of correctly charged Asn-tRNA(Asn) or Gln-tRNA(Gln) through the transamidation of misacylated Asp-tRNA(Asn) or Glu-tRNA(Gln) in organisms which lack either or both of asparaginyl-tRNA or glutaminyl-tRNA synthetases. The reaction takes place in the presence of glutamine and ATP through an activated phospho-Asp-tRNA(Asn) or phospho-Glu-tRNA(Gln). This chain is Aspartyl/glutamyl-tRNA(Asn/Gln) amidotransferase subunit B, found in Agrobacterium fabrum (strain C58 / ATCC 33970) (Agrobacterium tumefaciens (strain C58)).